Consider the following 381-residue polypeptide: F-box/LRR-repeat protein At4g14103 (381 aa).

The F-box domain occupies 7-60; the sequence is RDVISSLPDDISSHILSFLPTKEAASTSVLSKKWRYLFAFVPNLDLDDSVYLNP. LRR repeat units follow at residues 118–146, 171–196, 218–243, 249–274, 299–330, and 331–356; these read DLHL…KLRF, HFEE…VLDD, SWQE…KFTD, YPKV…LINY, TLYL…TIES, and NPRV…IFQG.

This is F-box/LRR-repeat protein At4g14103 from Arabidopsis thaliana (Mouse-ear cress).